We begin with the raw amino-acid sequence, 217 residues long: Ribonuclease HII (217 aa).

The RNase H type-2 domain maps to 27–216 (SQVAGVDEAG…VKESIQEGVC (190 aa)). Asp-33, Glu-34, and Asp-126 together coordinate a divalent metal cation.

The protein belongs to the RNase HII family. Mn(2+) serves as cofactor. It depends on Mg(2+) as a cofactor.

The protein resides in the cytoplasm. It catalyses the reaction Endonucleolytic cleavage to 5'-phosphomonoester.. Its function is as follows. Endonuclease that specifically degrades the RNA of RNA-DNA hybrids. The polypeptide is Ribonuclease HII (rnhB) (Chlamydia trachomatis serovar D (strain ATCC VR-885 / DSM 19411 / UW-3/Cx)).